Here is a 98-residue protein sequence, read N- to C-terminus: DNA-binding protein Fis (98 aa).

The segment at residues 74–93 (QTRAATMLGINRGTLRKKLK) is a DNA-binding region (H-T-H motif).

The protein belongs to the transcriptional regulatory Fis family. Homodimer.

Functionally, activates ribosomal RNA transcription. Plays a direct role in upstream activation of rRNA promoters. The polypeptide is DNA-binding protein Fis (Glaesserella parasuis serovar 5 (strain SH0165) (Haemophilus parasuis)).